The sequence spans 382 residues: Alkanesulfonate monooxygenase (382 aa).

The protein belongs to the SsuD family. As to quaternary structure, homotetramer.

The catalysed reaction is an alkanesulfonate + FMNH2 + O2 = an aldehyde + FMN + sulfite + H2O + 2 H(+). Its function is as follows. Catalyzes the desulfonation of aliphatic sulfonates. The protein is Alkanesulfonate monooxygenase of Yersinia pseudotuberculosis serotype IB (strain PB1/+).